The chain runs to 475 residues: Probable GABA permease (475 aa).

12 helical membrane-spanning segments follow: residues valine 27–alanine 47, isoleucine 48–leucine 68, leucine 105–leucine 125, alanine 127–valine 147, phenylalanine 163–valine 183, alanine 211–isoleucine 231, valine 250–proline 270, leucine 296–threonine 316, proline 345–proline 365, valine 368–alanine 388, proline 413–methionine 433, and histidine 438–alanine 458.

It belongs to the amino acid-polyamine-organocation (APC) superfamily. Amino acid transporter (AAT) (TC 2.A.3.1) family.

The protein resides in the membrane. In terms of biological role, involved in the degradation of beta-alanine. The chain is Probable GABA permease (bauD) from Pseudomonas aeruginosa (strain ATCC 15692 / DSM 22644 / CIP 104116 / JCM 14847 / LMG 12228 / 1C / PRS 101 / PAO1).